A 680-amino-acid polypeptide reads, in one-letter code: ABC transporter B family member 24, mitochondrial (680 aa).

The N-terminal 75 residues, 1–75 (MMRVSQLQLC…MFFSTSTSAP (75 aa)), are a transit peptide targeting the mitochondrion. The region spanning 108 to 402 (VISAFACLVG…LGVVYSDTVQ (295 aa)) is the ABC transmembrane type-1 domain. 6 helical membrane passes run 109–129 (ISAF…PFLF), 145–165 (NPYL…YGIA), 232–252 (AMVF…CILA), 255–275 (FGAV…AFTL), 340–360 (FALL…TAMV), and 376–396 (LVMV…LGVV). In terms of domain architecture, ABC transporter spans 439-673 (ISFENVHFSY…SGRYAKLWTQ (235 aa)). ATP-binding positions include Tyr-448 and 472–483 (GSSGSGKSTILR).

The protein belongs to the ABC transporter superfamily. ABCB family. Heavy Metal importer (TC 3.A.1.210) subfamily. Homodimer. As to expression, mostly expressed at low levels in roots and flowers.

It is found in the mitochondrion inner membrane. Performs an essential function in the generation of cytoplasmic iron-sulfur proteins by mediating export of Fe/S cluster precursors synthesized by NFS1 and other mitochondrial proteins. Not involved in the export of cyclic pyranopterin monophosphate (cPMP) from mitochondria to the cytosol. The sequence is that of ABC transporter B family member 24, mitochondrial (ABCB24) from Arabidopsis thaliana (Mouse-ear cress).